A 199-amino-acid polypeptide reads, in one-letter code: Thymidine kinase (199 aa).

ATP contacts are provided by residues 15–22 and 88–91; these read GSMFSGKS and DEVQ. Residue E89 is the Proton acceptor of the active site. Residues C145, C148, C183, and H186 each coordinate Zn(2+).

It belongs to the thymidine kinase family. As to quaternary structure, homotetramer.

It localises to the cytoplasm. The enzyme catalyses thymidine + ATP = dTMP + ADP + H(+). The chain is Thymidine kinase from Staphylococcus epidermidis (strain ATCC 12228 / FDA PCI 1200).